The following is a 341-amino-acid chain: Enduracididine beta-hydroxylase (341 aa).

2 residues coordinate Fe cation: His146 and Glu148. Residues 203 to 223 (HRIHGKAPGDESARESALRER) are disordered. Fe cation is bound at residue His300.

This sequence belongs to the clavaminate synthase family. Requires Fe(2+) as cofactor.

The catalysed reaction is L-enduracididine + 2-oxoglutarate + O2 = (3S)-3-hydroxy-L-enduracididine + succinate + CO2. It functions in the pathway antibiotic biosynthesis. Hydroxylates the beta carbon of free L-enduracididine to produce (3S)-3-hydroxy-L-enduracididine in biosynthesis of the nonproteinogenic amino acid beta-hydroxyenduracididine, a component of antibiotic mannopeptimycin. This chain is Enduracididine beta-hydroxylase (mppO), found in Streptomyces hygroscopicus.